Consider the following 227-residue polypeptide: PKHD-type hydroxylase Swit_4046 (227 aa).

Residues 78 to 178 form the Fe2OG dioxygenase domain; it reads KVFPPLFNLY…RLCSFFWIQS (101 aa). Positions 96, 98, and 159 each coordinate Fe cation. Arg169 serves as a coordination point for 2-oxoglutarate.

Requires Fe(2+) as cofactor. The cofactor is L-ascorbate.

This is PKHD-type hydroxylase Swit_4046 from Rhizorhabdus wittichii (strain DSM 6014 / CCUG 31198 / JCM 15750 / NBRC 105917 / EY 4224 / RW1) (Sphingomonas wittichii).